We begin with the raw amino-acid sequence, 309 residues long: ASC1-like protein 1 (309 aa).

Transmembrane regions (helical) follow at residues 27-47, 84-104, 130-150, 156-176, 215-235, and 260-280; these read FFAL…LDCF, CVYF…EPWF, AVYM…MFWE, FGVS…SYVF, FLLF…FWIL, and YVFN…WVLI. The 215-residue stretch at 75–289 folds into the TLC domain; sequence RKFKESAWKC…IYRMLVRQIK (215 aa).

Its subcellular location is the endoplasmic reticulum membrane. In terms of biological role, mediates resistance to sphinganine-analog mycotoxins (SAMs) by restoring the sphingolipid biosynthesis. Could salvage the transport of GPI-anchored proteins from the endoplasmic reticulum to the Golgi apparatus in ceramides-depleted cells after SAM exposure. In Oryza sativa subsp. japonica (Rice), this protein is ASC1-like protein 1.